Reading from the N-terminus, the 702-residue chain is Kinesin-like protein KIF3A (702 aa).

The 332-residue stretch at 14-345 (NVKVVVRCRP…LRYANRAKNI (332 aa)) folds into the Kinesin motor domain. ATP is bound at residue 100–107 (GQTGTGKT). Positions 355–593 (PKDALLRQFQ…LSRELRLQML (239 aa)) form a coiled coil. 2 disordered regions span residues 372-424 (KKLE…KMIE) and 667-702 (LMKL…SLLQ). Over residues 376–400 (EGEEISGSDISGSEEDDDEEGEVGE) the composition is skewed to acidic residues. The span at 410–424 (DQAGKKKVSPDKMIE) shows a compositional bias: basic and acidic residues. The segment at 600–702 (PRDYQEMIEN…PETVIDSLLQ (103 aa)) is globular. Basic residues predominate over residues 675 to 690 (TSKGKARPKTGRRKRS). Ser-690 carries the phosphoserine modification.

The protein belongs to the TRAFAC class myosin-kinesin ATPase superfamily. Kinesin family. Kinesin II subfamily. In terms of assembly, heterodimer of KIF3A and KIF3B. Interacts with CIMAP3. Interacts with CLN3. Interacts with DCTN1. Interacts with FLCN. Interacts with AP3B1.

It localises to the cytoplasm. The protein localises to the cytoskeleton. The protein resides in the cell projection. It is found in the cilium. Its subcellular location is the microtubule organizing center. It localises to the centrosome. The protein localises to the centriole. Functionally, microtubule-based anterograde translocator for membranous organelles. Plus end-directed microtubule sliding activity in vitro. Plays a role in primary cilia formation. Plays a role in centriole cohesion and subdistal appendage organization and function. Regulates the formation of the subdistal appendage via recruitment of DCTN1 to the centriole. Also required for ciliary basal feet formation and microtubule anchoring to mother centriole. This Macaca fascicularis (Crab-eating macaque) protein is Kinesin-like protein KIF3A (KIF3A).